A 242-amino-acid polypeptide reads, in one-letter code: MKINILTLFPDMFTPLQVSMLGRGLEDGKWDLNLVNFRDFTTDLHHHVDDTPYGGGAGMVLQIMPIKKALDSLPSTGKIIITAPQGKTFNEKMAQEWAKEDELTFICGHYEGFDQRVYDLADETVSIGDYVLTGGELPTMSMVDATVRLLPGILGNSASSVEESFSHGLLEYPQYTRPADFEGKKSARSFKPVVIIKRLLNGDTIRLLKATYLHRPDMLENRNLSDEEKKMLQEIKNEMNED.

Residues G108 and 127–132 (IGDYVL) contribute to the S-adenosyl-L-methionine site.

Belongs to the RNA methyltransferase TrmD family. In terms of assembly, homodimer.

Its subcellular location is the cytoplasm. The enzyme catalyses guanosine(37) in tRNA + S-adenosyl-L-methionine = N(1)-methylguanosine(37) in tRNA + S-adenosyl-L-homocysteine + H(+). Functionally, specifically methylates guanosine-37 in various tRNAs. The polypeptide is tRNA (guanine-N(1)-)-methyltransferase (Lactobacillus acidophilus (strain ATCC 700396 / NCK56 / N2 / NCFM)).